Consider the following 130-residue polypeptide: S-protein homolog 32 (130 aa).

The N-terminal stretch at 1 to 21 is a signal peptide; sequence MKYFTIFVFVFSLCMLGHVSG.

This sequence belongs to the plant self-incompatibility (S1) protein family.

It localises to the secreted. This chain is S-protein homolog 32, found in Arabidopsis thaliana (Mouse-ear cress).